Reading from the N-terminus, the 204-residue chain is Ribonuclease HII (204 aa).

The RNase H type-2 domain occupies 1 to 197; sequence MILGIDEAGR…KNCILNPKLL (197 aa). 3 residues coordinate a divalent metal cation: Asp-6, Glu-7, and Asp-103.

This sequence belongs to the RNase HII family. Mn(2+) serves as cofactor. Requires Mg(2+) as cofactor.

Its subcellular location is the cytoplasm. It catalyses the reaction Endonucleolytic cleavage to 5'-phosphomonoester.. Endonuclease that specifically degrades the RNA of RNA-DNA hybrids. This Helicobacter pylori (strain P12) protein is Ribonuclease HII.